The sequence spans 342 residues: MTQFNIPVTMSSSLSIILVILVSLRTALSELCNPQDKQALLQIKKDLGNPTTLSSWLPTTDCCNRTWLGVLCDTDTQTYRVNNLDLSGHNLPKPYPIPSSLANLPYLNFLYIGGINNLVGPIPPAIAKLTQLHYLYITHTNVSGAIPDFLSQIKTLVTLDFSYNALSGTLPPSISSLPNLVGITFDGNRISGAIPDSYGSFSKLFTSMTISRNRLTGKIPPTFANLNLAFVDLSRNMLQGDASVLFGSDKNTQKIHLAKNSLDFDLEKVGLSKNLNGLDLRNNRIYGTLPQGLTQLKFLHSLNVSFNNLCGEIPQGGNLQRFDVSAYANNKCLCGSPLPACT.

The N-terminal stretch at 1–29 is a signal peptide; sequence MTQFNIPVTMSSSLSIILVILVSLRTALS. 2 disulfides stabilise this stretch: C32/C62 and C63/C72. N64 carries an N-linked (GlcNAc...) asparagine glycan. 10 LRR repeats span residues 82–107, 108–132, 133–156, 157–180, 181–205, 206–228, 229–252, 253–275, 276–299, and 300–319; these read NNLDLSGHNLPKPYPIPSSLANLPYL, NFLYIGGINNLVGPIPPAIAKLTQL, HYLYITHTNVSGAIPDFLSQIKTL, VTLDFSYNALSGTLPPSISSLPNL, VGITFDGNRISGAIPDSYGSFSKLF, TSMTISRNRLTGKIPPTFANLNL, AFVDLSRNMLQGDASVLFGSDKNT, QKIHLAKNSLDFDLEKVGLSKNL, NGLDLRNNRIYGTLPQGLTQLKFL, and HSLNVSFNNLCGEIPQGGNL. N-linked (GlcNAc...) asparagine glycosylation occurs at N141. N303 carries N-linked (GlcNAc...) asparagine glycosylation. 2 disulfides stabilise this stretch: C310/C332 and C334/C341.

This sequence belongs to the polygalacturonase-inhibiting protein family. In terms of tissue distribution, found in suspension-cultured cells and to a lesser extent in hypocotyls, leaves and flowers.

The protein localises to the secreted. It is found in the cell wall. It localises to the membrane. Inhibitor of fungal polygalacturonase. It is an important factor for plant resistance to phytopathogenic fungi. The chain is Polygalacturonase inhibitor 3 (PGIP3) from Phaseolus vulgaris (Kidney bean).